The primary structure comprises 1143 residues: cGMP-specific 3',5'-cyclic phosphodiesterase (1143 aa).

Composition is skewed to low complexity over residues 1–19 (MHGPVSRSSSSSNMTDVSS) and 31–45 (TTSSSSAATTSASSS). Residues 1 to 167 (MHGPVSRSSS…KASTTASQQD (167 aa)) form a disordered region. The span at 46–59 (KPLTNGANKTTIST) shows a compositional bias: polar residues. Low complexity predominate over residues 75-84 (GAIPASSSSG). Polar residues predominate over residues 96–107 (SNNNRPAATNRS). Residues 131–153 (SSSSPSQSPSQTQASIQTQTSQQ) show a composition bias toward low complexity. GAF domains follow at residues 272-424 (DIDV…GIGI) and 456-637 (NLEC…GLGI). The PDEase domain occupies 667 to 990 (SQDQTEKLTQ…RNWQDLAEKV (324 aa)). Catalysis depends on His743, which acts as the Proton donor. A divalent metal cation-binding residues include His747, His783, Asp784, and Asp894. Disordered stretches follow at residues 1031–1060 (QQSQHGSEDSHTPEHQRSGSRLSMKKTGAL) and 1090–1143 (SHVS…CALL). Composition is skewed to basic and acidic residues over residues 1036–1047 (GSEDSHTPEHQR) and 1090–1100 (SHVSEDMDDKS). Low complexity predominate over residues 1109–1127 (ASGSMGRMSASSSTSSTGG). A compositionally biased stretch (basic residues) spans 1133-1143 (SKKRSKLCALL). Position 1140 is a cysteine methyl ester (Cys1140). The S-farnesyl cysteine moiety is linked to residue Cys1140. A propeptide spans 1141–1143 (ALL) (removed in mature form).

Belongs to the cyclic nucleotide phosphodiesterase family. Interacts with PrBP. A divalent metal cation is required as a cofactor.

The protein localises to the cell membrane. The enzyme catalyses 3',5'-cyclic GMP + H2O = GMP + H(+). Functionally, has a role regulating cGMP transport in Malpighian tubule principal cells. This is cGMP-specific 3',5'-cyclic phosphodiesterase from Drosophila simulans (Fruit fly).